A 735-amino-acid chain; its full sequence is Disintegrin and metalloproteinase domain-containing protein 2 (735 aa).

The N-terminal stretch at 1-16 is a signal peptide; that stretch reads MWRVLFLLSGLGGLWM. Positions 17-174 are excised as a propeptide; sequence DSNFDSLPVQ…FKLQSIEPQK (158 aa). Topologically, residues 17-686 are extracellular; sequence DSNFDSLPVQ…ENVYHSKPMR (670 aa). N-linked (GlcNAc...) asparagine glycans are attached at residues Asn-76, Asn-122, and Asn-220. The region spanning 178–375 is the Peptidase M12B domain; it reads KYIEMHVVVE…QKSQCLHNQP (198 aa). Cystine bridges form between Cys-287/Cys-370, Cys-329/Cys-354, Cys-331/Cys-336, and Cys-445/Cys-465. N-linked (GlcNAc...) asparagine glycosylation is found at Asn-353, Asn-459, and Asn-566. The Disintegrin domain occupies 384–473; it reads QAVCGNAKLE…SCPENHFIQT (90 aa). Residues 612–645 enclose the EGF-like domain; the sequence is LGYDCTTDKCNHRGVCNNKKHCHCSASYLPPDCS. Cystine bridges form between Cys-616–Cys-627, Cys-621–Cys-633, and Cys-635–Cys-644. The helical transmembrane segment at 687–707 threads the bilayer; sequence WPLFLFIPFFIIFCVLIAIMV. Residues 708–735 lie on the Cytoplasmic side of the membrane; that stretch reads KVHFQRKKWRTEDYSTDEQPESESEPKG. A Phosphoserine modification is found at Ser-729.

As to quaternary structure, heterodimer with ADAM1/fertilin subunit alpha. The signal and the metalloprotease domain are cleaved during the epididymal maturation of the spermatozoa. In terms of tissue distribution, expressed specifically in testis.

The protein resides in the membrane. Functionally, sperm surface membrane protein that may be involved in sperm-egg plasma membrane adhesion and fusion during fertilization. Could have a direct role in sperm-zona binding or migration of sperm from the uterus into the oviduct. Interactions with egg membrane could be mediated via binding between its disintegrin-like domain to one or more integrins receptors on the egg. This is a non catalytic metalloprotease-like protein. The chain is Disintegrin and metalloproteinase domain-containing protein 2 (ADAM2) from Macaca fascicularis (Crab-eating macaque).